Here is a 308-residue protein sequence, read N- to C-terminus: Probable manganese-dependent inorganic pyrophosphatase (308 aa).

Mn(2+) is bound by residues histidine 9, aspartate 13, aspartate 15, aspartate 74, histidine 96, and aspartate 148.

It belongs to the PPase class C family. It depends on Mn(2+) as a cofactor.

Its subcellular location is the cytoplasm. The catalysed reaction is diphosphate + H2O = 2 phosphate + H(+). The polypeptide is Probable manganese-dependent inorganic pyrophosphatase (Oceanobacillus iheyensis (strain DSM 14371 / CIP 107618 / JCM 11309 / KCTC 3954 / HTE831)).